The following is a 232-amino-acid chain: 7-cyano-7-deazaguanine synthase (232 aa).

Residue 8–18 (FSGGQDSTTCL) participates in ATP binding. Residues cysteine 189, cysteine 198, cysteine 201, and cysteine 204 each coordinate Zn(2+).

Belongs to the QueC family. The cofactor is Zn(2+).

The enzyme catalyses 7-carboxy-7-deazaguanine + NH4(+) + ATP = 7-cyano-7-deazaguanine + ADP + phosphate + H2O + H(+). Its pathway is purine metabolism; 7-cyano-7-deazaguanine biosynthesis. Its function is as follows. Catalyzes the ATP-dependent conversion of 7-carboxy-7-deazaguanine (CDG) to 7-cyano-7-deazaguanine (preQ(0)). The protein is 7-cyano-7-deazaguanine synthase of Photorhabdus laumondii subsp. laumondii (strain DSM 15139 / CIP 105565 / TT01) (Photorhabdus luminescens subsp. laumondii).